The chain runs to 298 residues: Quinolinate synthase (298 aa).

2 residues coordinate iminosuccinate: His-19 and Ser-36. Cys-81 provides a ligand contact to [4Fe-4S] cluster. Iminosuccinate-binding positions include 107-109 and Ser-124; that span reads YVN. Cys-168 contacts [4Fe-4S] cluster. Iminosuccinate contacts are provided by residues 193–195 and Thr-210; that span reads HPE. Cys-254 is a binding site for [4Fe-4S] cluster.

It belongs to the quinolinate synthase family. Type 2 subfamily. Requires [4Fe-4S] cluster as cofactor.

Its subcellular location is the cytoplasm. The catalysed reaction is iminosuccinate + dihydroxyacetone phosphate = quinolinate + phosphate + 2 H2O + H(+). The protein operates within cofactor biosynthesis; NAD(+) biosynthesis; quinolinate from iminoaspartate: step 1/1. Its activity is regulated as follows. Inhibited by 4,5 dithiohydroxyphthalic acid (DTHPA) analogs, which bind to the catalytic iron site of the [4Fe-4S] cluster. Functionally, catalyzes the condensation of iminoaspartate with dihydroxyacetone phosphate to form quinolinate. This is Quinolinate synthase from Thermotoga maritima (strain ATCC 43589 / DSM 3109 / JCM 10099 / NBRC 100826 / MSB8).